A 358-amino-acid polypeptide reads, in one-letter code: Valine dehydrogenase (358 aa).

Lys-88 is an active-site residue. Position 188 to 194 (188 to 194 (GVGKVGH)) interacts with NAD(+).

Belongs to the Glu/Leu/Phe/Val dehydrogenases family. In terms of assembly, homodimer.

The protein resides in the cytoplasm. The catalysed reaction is L-valine + NAD(+) + H2O = 3-methyl-2-oxobutanoate + NH4(+) + NADH + H(+). Its pathway is amino-acid degradation; L-valine degradation. Oxidative deamination of branched-chain amino acids. The catabolism of valine is the major source of fatty acid precursors for macrolide biosynthesis and a vital source of antibiotic precursors. This is Valine dehydrogenase (vdh) from Streptomyces virginiae (Streptomyces cinnamonensis).